A 911-amino-acid chain; its full sequence is DNA replication licensing factor mcm4 (911 aa).

The segment at 1–132 (MSSSQQSGRA…RPGVSTPSSL (132 aa)) is disordered. A phosphoserine mark is found at Ser37, Ser38, and Ser41. Low complexity predominate over residues 42-56 (TRLTTPRTTARTPLA). Polar residues predominate over residues 63-84 (ESSSPGPNIPQSSRSHLLSQRN). Ser92 is modified (phosphoserine). The region spanning 493 to 702 (IYDILSRSLA…LDRKLANHIV (210 aa)) is the MCM domain. 545–552 (GDPSTSKS) contacts ATP. Positions 677–680 (SRFD) match the Arginine finger motif.

It belongs to the MCM family. As to quaternary structure, component of the mcm2-7 complex. The complex forms a toroidal hexameric ring with the proposed subunit order mcm2-mcm6-mcm4-mcm7-mcm3-mcm5. The heterodimers of mcm4/mcm6 and mcm3/mcm5 interact with mcm2 and mcm7.

It is found in the nucleus. It carries out the reaction ATP + H2O = ADP + phosphate + H(+). Acts as a component of the mcm2-7 complex (mcm complex) which is the putative replicative helicase essential for 'once per cell cycle' DNA replication initiation and elongation in eukaryotic cells. The active ATPase sites in the mcm2-7 ring are formed through the interaction surfaces of two neighboring subunits such that a critical structure of a conserved arginine finger motif is provided in trans relative to the ATP-binding site of the Walker A box of the adjacent subunit. The six ATPase active sites, however, are likely to contribute differentially to the complex helicase activity. Required for S phase execution. In Schizosaccharomyces pombe (strain 972 / ATCC 24843) (Fission yeast), this protein is DNA replication licensing factor mcm4 (mcm4).